Here is a 244-residue protein sequence, read N- to C-terminus: Venom nerve growth factor 3 (244 aa).

The signal sequence occupies residues 1 to 18; it reads MSMLCYTLIIAFLIGIWA. Positions 19 to 125 are excised as a propeptide; the sequence is APKSEDNVPL…TLNRNIRAKR (107 aa). Over residues 47–66 the composition is skewed to basic and acidic residues; sequence GLKTSRNTDQRHPAPKKAED. A disordered region spans residues 47 to 67; the sequence is GLKTSRNTDQRHPAPKKAEDQ. Intrachain disulfides connect cysteine 139–cysteine 205, cysteine 181–cysteine 233, and cysteine 193–cysteine 235.

It belongs to the NGF-beta family. As to quaternary structure, homodimer; non-covalently linked. Expressed by the venom gland.

The protein localises to the secreted. Nerve growth factor is important for the development and maintenance of the sympathetic and sensory nervous systems. It stimulates division and differentiation of sympathetic and embryonic sensory neurons as well as basal forebrain cholinergic neurons in the brain. Its relevance in the snake venom is not clear. However, it has been shown to inhibit metalloproteinase-dependent proteolysis of platelet glycoprotein Ib alpha, suggesting a metalloproteinase inhibition to prevent metalloprotease autodigestion and/or protection against prey proteases. Binds a lipid between the two protein chains in the homodimer. The lipid-bound form promotes histamine relase from mouse mast cells, contrary to the lipid-free form. This Notechis scutatus scutatus (Mainland tiger snake) protein is Venom nerve growth factor 3.